The primary structure comprises 227 residues: Endolytic peptidoglycan transglycosylase RlpA (227 aa).

Residues 1–21 form the signal peptide; sequence MMNHKFVLLILLIFYCFFLSG. Cysteine 22 is lipidated: N-palmitoyl cysteine. The S-diacylglycerol cysteine moiety is linked to residue cysteine 22.

This sequence belongs to the RlpA family.

The protein resides in the cell membrane. In terms of biological role, lytic transglycosylase with a strong preference for naked glycan strands that lack stem peptides. This is Endolytic peptidoglycan transglycosylase RlpA from Rickettsia bellii (strain RML369-C).